The sequence spans 326 residues: uncharacterized protein (326 aa).

The region spanning 15-76 is the S4 RNA-binding domain; the sequence is VRIEKFCLKL…IEPYLHNHSE (62 aa). The active site involves Asp147.

It belongs to the pseudouridine synthase RluA family.

The catalysed reaction is a uridine in RNA = a pseudouridine in RNA. This is an uncharacterized protein from Mycoplasma pneumoniae (strain ATCC 29342 / M129 / Subtype 1) (Mycoplasmoides pneumoniae).